Reading from the N-terminus, the 142-residue chain is COMPASS component SHG1 (142 aa).

This sequence belongs to the SHG1 family. In terms of assembly, component of the Set1C/COMPASS complex which consists of SET1(2), BRE2(2), SPP1(2), SDC1(1), SHG1(1), SWD1(1), SWD2(1), and SWD3(1).

It localises to the nucleus. The COMPASS (Set1C) complex specifically mono-, di- and trimethylates histone H3 to form H3K4me1/2/3, which subsequently plays a role in telomere length maintenance and transcription elongation regulation. The chain is COMPASS component SHG1 (SHG1) from Saccharomyces cerevisiae (strain ATCC 204508 / S288c) (Baker's yeast).